Here is a 446-residue protein sequence, read N- to C-terminus: Xanthone prenyltransferase A (446 aa).

The dimethylallyl diphosphate site is built by arginine 113, lysine 199, tyrosine 201, arginine 263, lysine 265, tyrosine 267, tyrosine 369, and tyrosine 440.

Belongs to the tryptophan dimethylallyltransferase family.

It participates in secondary metabolite biosynthesis. Xanthone prenyltransferase involved in the conversion of monodictyphenone to the prenyl xanthones such as emericellin, shamixanthone and epishamixanthone. Monodictyphenone is first converted to variecoxanthone A via a paeciloxanthone intermediate by the consecutive actions of the FAD-dependent monooxygenase mdpD and the xanthone prenyltransferase xptB. XptB catalyzes regular O-prenylation at the hydroxy group of C-7 of the xanthone ring. Variecoxanthone A is further prenylated to emericellin by xptA before being reduced to shamixanthone and epishamixanthone by the dehydrogenase xptC. This chain is Xanthone prenyltransferase A, found in Emericella nidulans (strain FGSC A4 / ATCC 38163 / CBS 112.46 / NRRL 194 / M139) (Aspergillus nidulans).